Here is a 114-residue protein sequence, read N- to C-terminus: MSETIEGNVQILRLSPGDSTNFPKPGDLVTIHYTGTLENGQKFDSSVDRGSPFQCNIGVGQVIKGWDAAIPKLSVGEKARLTIPGPYAYGPRGFPGLIPPNATLVFDVELLKIN.

The region spanning 26–114 (GDLVTIHYTG…VFDVELLKIN (89 aa)) is the PPIase FKBP-type domain.

Belongs to the FKBP-type PPIase family. FKBP1 subfamily.

It is found in the cytoplasm. It carries out the reaction [protein]-peptidylproline (omega=180) = [protein]-peptidylproline (omega=0). Its activity is regulated as follows. Inhibited by both FK506 and rapamycin. In terms of biological role, PPIases accelerate the folding of proteins. It catalyzes the cis-trans isomerization of proline imidic peptide bonds in oligopeptides. This is FK506-binding protein 1 (FPR1) from Kluyveromyces lactis (strain ATCC 8585 / CBS 2359 / DSM 70799 / NBRC 1267 / NRRL Y-1140 / WM37) (Yeast).